A 387-amino-acid chain; its full sequence is S-adenosylmethionine synthase (387 aa).

Residue Glu-8 participates in Mg(2+) binding. ATP is bound at residue His-14. Residue Glu-42 participates in K(+) binding. L-methionine contacts are provided by Glu-55 and Gln-98. ATP-binding positions include 166–168 (DGK), 234–237 (SGRF), Asp-245, 251–252 (RK), Ala-268, Lys-272, and Lys-276. Asp-245 is an L-methionine binding site. Lys-276 contacts L-methionine.

Belongs to the AdoMet synthase family. In terms of assembly, homotetramer. Mn(2+) is required as a cofactor. Requires Mg(2+) as cofactor. Co(2+) serves as cofactor. It depends on K(+) as a cofactor.

The protein localises to the cytoplasm. It carries out the reaction L-methionine + ATP + H2O = S-adenosyl-L-methionine + phosphate + diphosphate. It functions in the pathway amino-acid biosynthesis; S-adenosyl-L-methionine biosynthesis; S-adenosyl-L-methionine from L-methionine: step 1/1. Catalyzes the formation of S-adenosylmethionine from methionine and ATP. The reaction comprises two steps that are both catalyzed by the same enzyme: formation of S-adenosylmethionine (AdoMet) and triphosphate, and subsequent hydrolysis of the triphosphate. This chain is S-adenosylmethionine synthase (METK-1), found in Ostreococcus lucimarinus (strain CCE9901).